A 493-amino-acid chain; its full sequence is Bifunctional protein GlmU (493 aa).

The tract at residues 1-246 (MTGELDVDGE…SWLVAGINDR (246 aa)) is pyrophosphorylase. UDP-N-acetyl-alpha-D-glucosamine is bound by residues 21-24 (LAAG), lysine 35, glutamine 88, 93-94 (GT), 117-119 (SGD), glycine 156, glutamate 171, asparagine 186, and asparagine 244. Position 119 (aspartate 119) interacts with Mg(2+). A Mg(2+)-binding site is contributed by asparagine 244. A linker region spans residues 247–267 (VQLTAAATELNARIIRRWQLA). Residues 268–493 (GVTIHDPRTT…DGPADDASDA (226 aa)) form an N-acetyltransferase region. 2 residues coordinate UDP-N-acetyl-alpha-D-glucosamine: arginine 349 and lysine 367. The active-site Proton acceptor is histidine 379. UDP-N-acetyl-alpha-D-glucosamine is bound by residues tyrosine 382 and asparagine 393. Residues alanine 396, 402–403 (NY), serine 421, and alanine 439 each bind acetyl-CoA. Residues 470 to 493 (RPGTPEARAAVEAADGPADDASDA) are disordered.

This sequence in the N-terminal section; belongs to the N-acetylglucosamine-1-phosphate uridyltransferase family. In the C-terminal section; belongs to the transferase hexapeptide repeat family. Homotrimer. The cofactor is Mg(2+).

Its subcellular location is the cytoplasm. It carries out the reaction alpha-D-glucosamine 1-phosphate + acetyl-CoA = N-acetyl-alpha-D-glucosamine 1-phosphate + CoA + H(+). It catalyses the reaction N-acetyl-alpha-D-glucosamine 1-phosphate + UTP + H(+) = UDP-N-acetyl-alpha-D-glucosamine + diphosphate. It participates in nucleotide-sugar biosynthesis; UDP-N-acetyl-alpha-D-glucosamine biosynthesis; N-acetyl-alpha-D-glucosamine 1-phosphate from alpha-D-glucosamine 6-phosphate (route II): step 2/2. The protein operates within nucleotide-sugar biosynthesis; UDP-N-acetyl-alpha-D-glucosamine biosynthesis; UDP-N-acetyl-alpha-D-glucosamine from N-acetyl-alpha-D-glucosamine 1-phosphate: step 1/1. It functions in the pathway bacterial outer membrane biogenesis; LPS lipid A biosynthesis. Functionally, catalyzes the last two sequential reactions in the de novo biosynthetic pathway for UDP-N-acetylglucosamine (UDP-GlcNAc). The C-terminal domain catalyzes the transfer of acetyl group from acetyl coenzyme A to glucosamine-1-phosphate (GlcN-1-P) to produce N-acetylglucosamine-1-phosphate (GlcNAc-1-P), which is converted into UDP-GlcNAc by the transfer of uridine 5-monophosphate (from uridine 5-triphosphate), a reaction catalyzed by the N-terminal domain. In Clavibacter sepedonicus (Clavibacter michiganensis subsp. sepedonicus), this protein is Bifunctional protein GlmU.